Reading from the N-terminus, the 122-residue chain is Large ribosomal subunit protein uL22 (122 aa).

Positions 102–122 (VAEGKEMKSSKSHKKNQAEGK) are disordered.

The protein belongs to the universal ribosomal protein uL22 family. In terms of assembly, part of the 50S ribosomal subunit.

Functionally, this protein binds specifically to 23S rRNA; its binding is stimulated by other ribosomal proteins, e.g. L4, L17, and L20. It is important during the early stages of 50S assembly. It makes multiple contacts with different domains of the 23S rRNA in the assembled 50S subunit and ribosome. Its function is as follows. The globular domain of the protein is located near the polypeptide exit tunnel on the outside of the subunit, while an extended beta-hairpin is found that lines the wall of the exit tunnel in the center of the 70S ribosome. This chain is Large ribosomal subunit protein uL22, found in Helicobacter pylori (strain HPAG1).